Reading from the N-terminus, the 241-residue chain is MILYPAIDLKDGQCVRLLHGDMEKATVFNNSPADQAERFVRDGFSWLHVVDLNGAIEGKSVNTAAVQSILESISIPVQLGGGIRTLEGVEAWIEAGVSRVILGTVAVHDPDLVRKAARLWPEQIAVAVDVRDGKVAVDGWTGLSDLDAITLGKRFEDVGVAALIVTDISRDGALTGVNVEGVGELADAVSIPVIASGGVASVADIERLKARPGVEIAGAILGRSLYAGTIRPAEALTIAAA.

Asp8 functions as the Proton acceptor in the catalytic mechanism. Asp129 serves as the catalytic Proton donor.

This sequence belongs to the HisA/HisF family.

The protein resides in the cytoplasm. The enzyme catalyses 1-(5-phospho-beta-D-ribosyl)-5-[(5-phospho-beta-D-ribosylamino)methylideneamino]imidazole-4-carboxamide = 5-[(5-phospho-1-deoxy-D-ribulos-1-ylimino)methylamino]-1-(5-phospho-beta-D-ribosyl)imidazole-4-carboxamide. Its pathway is amino-acid biosynthesis; L-histidine biosynthesis; L-histidine from 5-phospho-alpha-D-ribose 1-diphosphate: step 4/9. This is 1-(5-phosphoribosyl)-5-[(5-phosphoribosylamino)methylideneamino] imidazole-4-carboxamide isomerase from Caulobacter sp. (strain K31).